The primary structure comprises 600 residues: Aspartate--tRNA(Asp/Asn) ligase (600 aa).

Glu175 is an L-aspartate binding site. The aspartate stretch occupies residues 199-202 (QLFK). L-aspartate is bound at residue Arg221. ATP contacts are provided by residues 221-223 (RDE) and Gln230. Position 453 (His453) interacts with L-aspartate. Residue Glu487 coordinates ATP. Arg494 serves as a coordination point for L-aspartate. Residue 539-542 (GWDR) coordinates ATP. Residues 564–600 (GGVDPLTDAPAPITPLQRKESGIDAKPKAAENKPEEK) are disordered. Basic and acidic residues predominate over residues 580–600 (QRKESGIDAKPKAAENKPEEK).

This sequence belongs to the class-II aminoacyl-tRNA synthetase family. Type 1 subfamily. Homodimer.

Its subcellular location is the cytoplasm. It carries out the reaction tRNA(Asx) + L-aspartate + ATP = L-aspartyl-tRNA(Asx) + AMP + diphosphate. Functionally, aspartyl-tRNA synthetase with relaxed tRNA specificity since it is able to aspartylate not only its cognate tRNA(Asp) but also tRNA(Asn). Reaction proceeds in two steps: L-aspartate is first activated by ATP to form Asp-AMP and then transferred to the acceptor end of tRNA(Asp/Asn). The protein is Aspartate--tRNA(Asp/Asn) ligase of Corynebacterium efficiens (strain DSM 44549 / YS-314 / AJ 12310 / JCM 11189 / NBRC 100395).